We begin with the raw amino-acid sequence, 193 residues long: Immunogenic protein MPB70 (193 aa).

An N-terminal signal peptide occupies residues 1 to 30; sequence MKVKNTIAATSFAAAGLAALAVAVSPPAAA. Residues 57 to 189 enclose the FAS1 domain; it reads QDPVAVAASN…ATVYMIDSVL (133 aa).

In terms of assembly, generally found as a monomer; homodimer in culture fluids.

The protein localises to the secreted. The protein is Immunogenic protein MPB70 (mpb70) of Mycobacterium bovis (strain ATCC BAA-935 / AF2122/97).